Consider the following 334-residue polypeptide: MDVSRIRFFRLMTGDFAHGISIPEKVAEIFSGQITKGFNLKSPSGETWRVGVAKVADELILKSGWEDFAKAHELQENDLLFFTCNGHGNGSCSFDVLIFDASGCEKVSCFFTGKKNSYMCKNFNSIGGQVAGQYLSSDSEDTSTPSVLIGSPHKASTSKKLSGKTKTNPRKEPEDPNCSHWHVIEEKNTDDDEHADYHYTRFANYLTGEERDEIFSLVSLQPGNPVFVVVLQTAHVRRRNILIVPTRFAADHLERKSHDILLIRPNRKQKWSVKYYYLSNTTRGFNCHRWIKFIRENRLREGNVCIFELMKGARRPTMTVHVIGKADNRFVLLG.

Positions 5-102 form a DNA-binding region, TF-B3 1; it reads RIRFFRLMTG…SFDVLIFDAS (98 aa). Residues 142–178 form a disordered region; it reads TSTPSVLIGSPHKASTSKKLSGKTKTNPRKEPEDPNC. Residues 154–166 show a composition bias toward low complexity; it reads KASTSKKLSGKTK. Positions 227 to 326 form a DNA-binding region, TF-B3 2; the sequence is FVVVLQTAHV…TMTVHVIGKA (100 aa).

The protein localises to the nucleus. In Oryza sativa subsp. japonica (Rice), this protein is B3 domain-containing protein LOC_Os12g40090.